The sequence spans 203 residues: Large ribosomal subunit protein bL25 (203 aa).

This sequence belongs to the bacterial ribosomal protein bL25 family. CTC subfamily. In terms of assembly, part of the 50S ribosomal subunit; part of the 5S rRNA/L5/L18/L25 subcomplex. Contacts the 5S rRNA. Binds to the 5S rRNA independently of L5 and L18.

In terms of biological role, this is one of the proteins that binds to the 5S RNA in the ribosome where it forms part of the central protuberance. This Psychromonas ingrahamii (strain DSM 17664 / CCUG 51855 / 37) protein is Large ribosomal subunit protein bL25.